Reading from the N-terminus, the 891-residue chain is Inter-alpha-trypsin inhibitor heavy chain H3 (891 aa).

The signal sequence occupies residues 1-20; that stretch reads MALAQWPYLILALLSGLAVS. The propeptide occupies 21–34; it reads GFPRNPSLLLGKRS. The 130-residue stretch at 29 to 158 folds into the VIT domain; the sequence is LLGKRSLPGR…KVTFELTYEE (130 aa). An N-linked (GlcNAc...) asparagine glycan is attached at N91. Positions 284-467 constitute a VWFA domain; sequence SVVFVIDVSG…LQLQGFYEEV (184 aa). At D651 the chain carries Aspartate 1-(chondroitin 4-sulfate)-ester. The propeptide occupies 652–891; the sequence is PHFIIQIPEK…HRDYIVPNLF (240 aa).

It belongs to the ITIH family. I-alpha-I plasma protease inhibitors are assembled from one or two heavy chains (H1, H2 or H3) and one light chain, bikunin. Inter-alpha-inhibitor (I-alpha-I) is composed of H1, H2 and bikunin, inter-alpha-like inhibitor (I-alpha-LI) of H2 and bikunin, and pre-alpha-inhibitor (P-alpha-I) of H3 and bikunin.

The protein resides in the secreted. Its function is as follows. May act as a carrier of hyaluronan in serum or as a binding protein between hyaluronan and other matrix protein, including those on cell surfaces in tissues to regulate the localization, synthesis and degradation of hyaluronan which are essential to cells undergoing biological processes. This Bos taurus (Bovine) protein is Inter-alpha-trypsin inhibitor heavy chain H3 (ITIH3).